The chain runs to 179 residues: Ribosome maturation factor RimM (179 aa).

The region spanning 102–179 (DGEYYWYQLE…EMKVDWDADF (78 aa)) is the PRC barrel domain.

It belongs to the RimM family. Binds ribosomal protein uS19.

It is found in the cytoplasm. An accessory protein needed during the final step in the assembly of 30S ribosomal subunit, possibly for assembly of the head region. Essential for efficient processing of 16S rRNA. May be needed both before and after RbfA during the maturation of 16S rRNA. It has affinity for free ribosomal 30S subunits but not for 70S ribosomes. The polypeptide is Ribosome maturation factor RimM (Pseudomonas savastanoi pv. phaseolicola (strain 1448A / Race 6) (Pseudomonas syringae pv. phaseolicola (strain 1448A / Race 6))).